The primary structure comprises 295 residues: uncharacterized protein (295 aa).

The region spanning 1 to 58 is the HTH lysR-type domain; it reads MESGDLRVFQMVAREGTITKAALQLGYVQSNVTARIQQLEAELGTTLFLRHNRGMTLS. A DNA-binding region (H-T-H motif) is located at residues 18-37; it reads ITKAALQLGYVQSNVTARIQ.

The protein belongs to the LysR transcriptional regulatory family.

This is an uncharacterized protein from Bacillus subtilis (strain 168).